Here is a 238-residue protein sequence, read N- to C-terminus: Inactive glycoside hydrolase XLP1 (238 aa).

Residues 1–19 (MKSFLIAIVIAVLLPVSAA) form the signal peptide. Glutamate 133 is a catalytic residue. N-linked (GlcNAc...) asparagine glycosylation is found at asparagine 171 and asparagine 187. Residue glutamate 219 is part of the active site.

The protein belongs to the glycosyl hydrolase 12 (cellulase H) family. Interacts with host apoplastic glucanase inhibitor GIP2.

It is found in the secreted. In terms of biological role, non-functional secreted XEG1-like protein that binds to host Nicotiana benthamiana apoplastic glucanase inhibitor protein GIP2 more tightly than does XEG1, thus it outcompetes XEG1 for GIP2 binding and frees functional XEG1 to support P.parasitica infection. With XEG1, is required to elevate apoplastic sugar during P.parasitica infection. This is Inactive glycoside hydrolase XLP1 from Phytophthora nicotianae (strain INRA-310) (Phytophthora parasitica).